The following is a 307-amino-acid chain: GTPase Era (307 aa).

In terms of domain architecture, Era-type G spans 17–186 (RCGFVAIVGR…LELLKPYLPE (170 aa)). Positions 25-32 (GRPNVGKS) are G1. 25-32 (GRPNVGKS) is a GTP binding site. The interval 51–55 (QTTRN) is G2. Residues 72 to 75 (DTPG) form a G3 region. GTP-binding positions include 72 to 76 (DTPGF) and 133 to 136 (NKID). The interval 133-136 (NKID) is G4. A G5 region spans residues 165–167 (VSA). One can recognise a KH type-2 domain in the interval 217–293 (LGEELPYAMN…FLKVWVKVKS (77 aa)).

Belongs to the TRAFAC class TrmE-Era-EngA-EngB-Septin-like GTPase superfamily. Era GTPase family. In terms of assembly, monomer.

It is found in the cytoplasm. Its subcellular location is the cell inner membrane. Functionally, an essential GTPase that binds both GDP and GTP, with rapid nucleotide exchange. Plays a role in 16S rRNA processing and 30S ribosomal subunit biogenesis and possibly also in cell cycle regulation and energy metabolism. The protein is GTPase Era of Neisseria meningitidis serogroup C / serotype 2a (strain ATCC 700532 / DSM 15464 / FAM18).